A 145-amino-acid polypeptide reads, in one-letter code: uncharacterized protein (145 aa).

The chain crosses the membrane as a helical span at residues 63–83 (FLCLPLFLSFLVANLILWLSF).

It is found in the mitochondrion membrane. This is an uncharacterized protein from Arabidopsis thaliana (Mouse-ear cress).